The following is a 61-amino-acid chain: Large ribosomal subunit protein bL32 (61 aa).

Residues 1–16 (MAVPKKKTSKSRKNMR) show a composition bias toward basic residues. The disordered stretch occupies residues 1 to 20 (MAVPKKKTSKSRKNMRRAHD).

This sequence belongs to the bacterial ribosomal protein bL32 family.

This is Large ribosomal subunit protein bL32 from Trichlorobacter lovleyi (strain ATCC BAA-1151 / DSM 17278 / SZ) (Geobacter lovleyi).